The primary structure comprises 232 residues: Lipoprotein-releasing system ATP-binding protein LolD (232 aa).

The region spanning 11-231 is the ABC transporter domain; it reads VYLHDIRRQY…SLENGHVVEL (221 aa). Residue 47 to 54 participates in ATP binding; sequence APSGSGKS.

This sequence belongs to the ABC transporter superfamily. Lipoprotein translocase (TC 3.A.1.125) family. The complex is composed of two ATP-binding proteins (LolD) and two transmembrane proteins (LolC and LolE).

The protein localises to the cell inner membrane. Its function is as follows. Part of the ABC transporter complex LolCDE involved in the translocation of mature outer membrane-directed lipoproteins, from the inner membrane to the periplasmic chaperone, LolA. Responsible for the formation of the LolA-lipoprotein complex in an ATP-dependent manner. This chain is Lipoprotein-releasing system ATP-binding protein LolD, found in Nitrobacter hamburgensis (strain DSM 10229 / NCIMB 13809 / X14).